Reading from the N-terminus, the 175-residue chain is SsrA-binding protein (175 aa).

Disordered stretches follow at residues 1-29 (MTRN…ERDA) and 152-175 (KRET…SRKS).

It belongs to the SmpB family.

It is found in the cytoplasm. Its function is as follows. Required for rescue of stalled ribosomes mediated by trans-translation. Binds to transfer-messenger RNA (tmRNA), required for stable association of tmRNA with ribosomes. tmRNA and SmpB together mimic tRNA shape, replacing the anticodon stem-loop with SmpB. tmRNA is encoded by the ssrA gene; the 2 termini fold to resemble tRNA(Ala) and it encodes a 'tag peptide', a short internal open reading frame. During trans-translation Ala-aminoacylated tmRNA acts like a tRNA, entering the A-site of stalled ribosomes, displacing the stalled mRNA. The ribosome then switches to translate the ORF on the tmRNA; the nascent peptide is terminated with the 'tag peptide' encoded by the tmRNA and targeted for degradation. The ribosome is freed to recommence translation, which seems to be the essential function of trans-translation. This is SsrA-binding protein from Koribacter versatilis (strain Ellin345).